A 163-amino-acid polypeptide reads, in one-letter code: Nucleotide-binding protein BCG9842_B4128 (163 aa).

Belongs to the YajQ family.

Functionally, nucleotide-binding protein. This Bacillus cereus (strain G9842) protein is Nucleotide-binding protein BCG9842_B4128.